Consider the following 1462-residue polypeptide: DNA polymerase alpha catalytic subunit (1462 aa).

Disordered regions lie at residues 1–33 (MAPVHGDDSLSDSGSFVSSRARREKKSKKGRQE) and 98–123 (DLEDDALDADEKGKDGKARNKDKRNV). The span at 20-29 (RARREKKSKK) shows a compositional bias: basic residues. The span at 106–116 (ADEKGKDGKAR) shows a compositional bias: basic and acidic residues. Thr-174 is modified (phosphothreonine). Phosphoserine occurs at positions 186, 190, and 209. Lys-224 carries the N6-acetyllysine modification. The tract at residues 232–251 (DVQVESTEEEQESGAMEFED) is disordered. Thr-406 is subject to Phosphothreonine. A DNA-binding region spans residues 650–715 (RINVCKAPHW…YHLSELVQQI (66 aa)). Lys-970 bears the N6-succinyllysine mark. The DNA-binding stretch occupies residues 1245 to 1376 (QFRVHHYHKD…TGPLCPACMK (132 aa)). Zn(2+) contacts are provided by Cys-1283, Cys-1286, Cys-1310, Cys-1315, Cys-1348, Cys-1353, Cys-1371, and Cys-1374. The CysA-type zinc finger occupies 1283 to 1318 (CPTCGTENIYDNVFDGSGTDMEPSLYRCSNIDCKAS). Positions 1348–1374 (CEEPTCRNRTRHLPLQFSRTGPLCPAC) match the CysB motif motif.

It belongs to the DNA polymerase type-B family. In terms of assembly, component of the alpha DNA polymerase complex (also known as the alpha DNA polymerase-primase complex) consisting of four subunits: the catalytic subunit POLA1, the regulatory subunit POLA2, and the primase complex subunits PRIM1 and PRIM2 respectively. Interacts with PARP1; this interaction functions as part of the control of replication fork progression. Interacts with MCM10 and WDHD1; these interactions recruit the polymerase alpha complex to the pre-replicative complex bound to DNA. Interacts with RPA1; this interaction stabilizes the replicative complex and reduces the misincorporation rate of DNA polymerase alpha by acting as a fidelity clamp. (Microbial infection) Interacts with SV40 Large T antigen; this interaction allows viral DNA replication. As to quaternary structure, (Microbial infection) Interacts with herpes simplex virus 1/HHV-1 replication origin-binding protein UL9. A 165 kDa form is probably produced by proteolytic cleavage at Lys-124.

Its subcellular location is the nucleus. The protein resides in the cytoplasm. It is found in the cytosol. The catalysed reaction is DNA(n) + a 2'-deoxyribonucleoside 5'-triphosphate = DNA(n+1) + diphosphate. With respect to regulation, autoinhibited in apo-primosome, where the zinc motif of POLA1 and oligonucleotide/olicosaccharide-binding domain of POLA2 are placed into the active site blocking RNA:DNA duplex entry. In terms of biological role, catalytic subunit of the DNA polymerase alpha complex (also known as the alpha DNA polymerase-primase complex) which plays an essential role in the initiation of DNA synthesis. During the S phase of the cell cycle, the DNA polymerase alpha complex (composed of a catalytic subunit POLA1, a regulatory subunit POLA2 and two primase subunits PRIM1 and PRIM2) is recruited to DNA at the replicative forks via direct interactions with MCM10 and WDHD1. The primase subunit of the polymerase alpha complex initiates DNA synthesis by oligomerising short RNA primers on both leading and lagging strands. These primers are initially extended by the polymerase alpha catalytic subunit and subsequently transferred to polymerase delta and polymerase epsilon for processive synthesis on the lagging and leading strand, respectively. The reason this transfer occurs is because the polymerase alpha has limited processivity and lacks intrinsic 3' exonuclease activity for proofreading error, and therefore is not well suited for replicating long complexes. In the cytosol, responsible for a substantial proportion of the physiological concentration of cytosolic RNA:DNA hybrids, which are necessary to prevent spontaneous activation of type I interferon responses. The protein is DNA polymerase alpha catalytic subunit (POLA1) of Homo sapiens (Human).